A 102-amino-acid polypeptide reads, in one-letter code: Guanyl-specific ribonuclease Pc (102 aa).

2 disulfide bridges follow: Cys-2/Cys-10 and Cys-6/Cys-101. His-38 is an active-site residue. Glu-56 (proton acceptor) is an active-site residue. His-90 functions as the Proton donor in the catalytic mechanism.

It belongs to the ribonuclease N1/T1 family.

It carries out the reaction [RNA] containing guanosine + H2O = an [RNA fragment]-3'-guanosine-3'-phosphate + a 5'-hydroxy-ribonucleotide-3'-[RNA fragment].. This Penicillium chrysogenum (Penicillium notatum) protein is Guanyl-specific ribonuclease Pc.